A 411-amino-acid chain; its full sequence is MKVEILCVGTELLLGDILNTNAQFLAKEFGAMGFSMYHQAVVGDNVERLKREFELAINRADIVVTTGGLGPTDDDLTKETAAEYFNKKLIFHKESYDEIVKFFNKIGKEISENNKKQAYFPEGCTILKNDHGTAPGCIIDENDKVVILLPGPPREIIPMFRNYVIPYLRKYQEGTIVSKVLRVCGIGESGAAEMLKDLIDNQTNPTIAPYAKDNEVTFRITAKAESEEVAMKLIEPMERKVRERLKENVYGVGDTSLEDVLGAMLIEKKLTIATAESCTGGLLSGRLINYPGISEVFMEGAVTYSNEAKMNRLGVKKETLESYGAVSSETAAEMAKGIAKTAGTNIGVSTTGVAGPGGGTKEKPVGLVYVGLCINGKVKTRKLNMPGDRQTVRNRVVNAVIDWIRREIINL.

This sequence belongs to the CinA family.

This chain is Putative competence-damage inducible protein, found in Clostridium acetobutylicum (strain ATCC 824 / DSM 792 / JCM 1419 / IAM 19013 / LMG 5710 / NBRC 13948 / NRRL B-527 / VKM B-1787 / 2291 / W).